The primary structure comprises 445 residues: Exodeoxyribonuclease 7 large subunit (445 aa).

The protein belongs to the XseA family. In terms of assembly, heterooligomer composed of large and small subunits.

The protein resides in the cytoplasm. It carries out the reaction Exonucleolytic cleavage in either 5'- to 3'- or 3'- to 5'-direction to yield nucleoside 5'-phosphates.. Its function is as follows. Bidirectionally degrades single-stranded DNA into large acid-insoluble oligonucleotides, which are then degraded further into small acid-soluble oligonucleotides. In Geotalea daltonii (strain DSM 22248 / JCM 15807 / FRC-32) (Geobacter daltonii), this protein is Exodeoxyribonuclease 7 large subunit.